Here is a 126-residue protein sequence, read N- to C-terminus: Small ribosomal subunit protein eS6 (126 aa).

It belongs to the eukaryotic ribosomal protein eS6 family.

This Nanoarchaeum equitans (strain Kin4-M) protein is Small ribosomal subunit protein eS6.